The primary structure comprises 632 residues: Phosphatidylinositol 3,4,5-trisphosphate 3-phosphatase and protein-tyrosine-phosphatase PTEN2B (632 aa).

Residues 1-12 are compositionally biased toward polar residues; it reads METDPANSSSKS. Residues 1–98 form a disordered region; the sequence is METDPANSSS…RESPPSIFSS (98 aa). Residues 39–48 are compositionally biased toward basic and acidic residues; it reads SAEREAHEDS. Over residues 63-73 the composition is skewed to polar residues; it reads MPASSTGSEPL. Residues 87-98 are compositionally biased toward low complexity; that stretch reads SPRESPPSIFSS. Positions 189-368 constitute a Phosphatase tensin-type domain; the sequence is RRYQEGEFDL…KYYERVQNQF (180 aa). The active-site Phosphocysteine intermediate is the Cys-307. The region spanning 375-502 is the C2 tensin-type domain; the sequence is ERRCMLRGFR…FHVEIVMIEP (128 aa). A disordered region spans residues 504–603; that stretch reads NSQPTKSKSD…SGHYNPIPNN (100 aa). Residues 505–527 are compositionally biased toward low complexity; it reads SQPTKSKSDSTQQQSQSSSSADS. Over residues 535–549 the composition is skewed to acidic residues; it reads KDDDVFSDSDGEEEG. The residue at position 541 (Ser-541) is a Phosphoserine. Polar residues predominate over residues 550–571; the sequence is NSQSYSTNEKTASSMHTTSKPH. Residues 584-594 are compositionally biased toward low complexity; the sequence is ANRSVTSSSSS.

It belongs to the PTEN phosphatase protein family. As to expression, expressed, at low levels, in seedlings, roots, stems, leaves, flowers and siliques. However, at protein level, not observed in older leaves, flowers and siliques.

It carries out the reaction O-phospho-L-tyrosyl-[protein] + H2O = L-tyrosyl-[protein] + phosphate. It catalyses the reaction a 1,2-diacyl-sn-glycero-3-phospho-(1D-myo-inositol-3,4,5-trisphosphate) + H2O = a 1,2-diacyl-sn-glycero-3-phospho-(1D-myo-inositol-4,5-bisphosphate) + phosphate. Functionally, protein tyrosine phosphatase that also exhibits a weak lipid phosphatase activity towards PtdIns(3)P. The polypeptide is Phosphatidylinositol 3,4,5-trisphosphate 3-phosphatase and protein-tyrosine-phosphatase PTEN2B (Arabidopsis thaliana (Mouse-ear cress)).